The primary structure comprises 161 residues: uncharacterized protein (161 aa).

The protein to M.thermoautotrophicum MTH862.

This is an uncharacterized protein from Methanocaldococcus jannaschii (strain ATCC 43067 / DSM 2661 / JAL-1 / JCM 10045 / NBRC 100440) (Methanococcus jannaschii).